Reading from the N-terminus, the 214-residue chain is Probable GTP-binding protein EngB (214 aa).

The EngB-type G domain occupies 22 to 194 (HLPEIAFAGR…WARIDALLEP (173 aa)). GTP-binding positions include 30-37 (GRSNVGKS), 57-61 (GRTQL), 75-78 (DLPG), 142-145 (TKCD), and 173-175 (FSA). Mg(2+)-binding residues include Ser-37 and Thr-59. Positions 195 to 214 (TAAETPGIPEEPAPPGPVND) are disordered. Residues 203–214 (PEEPAPPGPVND) are compositionally biased toward pro residues.

It belongs to the TRAFAC class TrmE-Era-EngA-EngB-Septin-like GTPase superfamily. EngB GTPase family. Mg(2+) is required as a cofactor.

Functionally, necessary for normal cell division and for the maintenance of normal septation. The chain is Probable GTP-binding protein EngB from Geobacter sp. (strain M21).